The chain runs to 304 residues: Aspartate carbamoyltransferase catalytic subunit (304 aa).

Residues Arg49 and Thr50 each contribute to the carbamoyl phosphate site. An L-aspartate-binding site is contributed by Lys77. Residues Arg99, His127, and Gln130 each coordinate carbamoyl phosphate. Residues Arg160 and Arg211 each coordinate L-aspartate. 2 residues coordinate carbamoyl phosphate: Ala252 and Pro253.

Belongs to the aspartate/ornithine carbamoyltransferase superfamily. ATCase family. In terms of assembly, heterododecamer (2C3:3R2) of six catalytic PyrB chains organized as two trimers (C3), and six regulatory PyrI chains organized as three dimers (R2).

It catalyses the reaction carbamoyl phosphate + L-aspartate = N-carbamoyl-L-aspartate + phosphate + H(+). It functions in the pathway pyrimidine metabolism; UMP biosynthesis via de novo pathway; (S)-dihydroorotate from bicarbonate: step 2/3. Catalyzes the condensation of carbamoyl phosphate and aspartate to form carbamoyl aspartate and inorganic phosphate, the committed step in the de novo pyrimidine nucleotide biosynthesis pathway. In Bacillus cytotoxicus (strain DSM 22905 / CIP 110041 / 391-98 / NVH 391-98), this protein is Aspartate carbamoyltransferase catalytic subunit.